The chain runs to 388 residues: Large ribosomal subunit protein uL3A (388 aa).

Residues 1 to 10 (MSHCKFEQPR) are compositionally biased toward basic and acidic residues. Residues 1 to 34 (MSHCKFEQPRHGSLGFLPRKRASRQRGKVKAFPK) form a disordered region. At Ser13 the chain carries Phosphoserine. Positions 18–31 (PRKRASRQRGKVKA) are enriched in basic residues. 6 positions are modified to phosphoserine: Ser65, Ser140, Ser143, Ser207, Ser295, and Ser355. Thr372 is subject to Phosphothreonine.

The protein belongs to the universal ribosomal protein uL3 family. Component of the large ribosomal subunit (LSU). Mature yeast ribosomes consist of a small (40S) and a large (60S) subunit. The 40S small subunit contains 1 molecule of ribosomal RNA (18S rRNA) and at least 33 different proteins. The large 60S subunit contains 3 rRNA molecules (25S, 5.8S and 5S rRNA) and at least 46 different proteins. uL3 forms together with ES39L one of the contact sites for the signal recognition particle that targets ribosomes to the endoplasmic reticulum membrane.

It localises to the cytoplasm. Component of the ribosome, a large ribonucleoprotein complex responsible for the synthesis of proteins in the cell. The small ribosomal subunit (SSU) binds messenger RNAs (mRNAs) and translates the encoded message by selecting cognate aminoacyl-transfer RNA (tRNA) molecules. The large subunit (LSU) contains the ribosomal catalytic site termed the peptidyl transferase center (PTC), which catalyzes the formation of peptide bonds, thereby polymerizing the amino acids delivered by tRNAs into a polypeptide chain. The nascent polypeptides leave the ribosome through a tunnel in the LSU and interact with protein factors that function in enzymatic processing, targeting, and the membrane insertion of nascent chains at the exit of the ribosomal tunnel. uL3 plays a role in coordinating processes of accommodating the aminoacyl-tRNA in the PTC. The chain is Large ribosomal subunit protein uL3A (rpl301) from Schizosaccharomyces pombe (strain 972 / ATCC 24843) (Fission yeast).